Reading from the N-terminus, the 1036-residue chain is MGGCEVREFLLQFGFFLPLLTAWPGDCSHVSNNQVVLLDTTTVLGELGWKTYPLNGWDAITEMDEHNRPIHTYQVCNVMEPNQNNWLRTNWISRDAAQKIYVEMKFTLRDCNSIPWVLGTCKETFNLFYMESDESHGIKFKPNQYTKIDTIAADESFTQMDLGDRILKLNTEIREVGPIERKGFYLAFQDIGACIALVSVRVFYKKCPFTVRNLAMFPDTIPRVDSSSLVEVRGSCVKSAEERDTPKLYCGADGDWLVPLGRCICSTGYEEIEGSCHACRPGFYKAFAGNTKCSKCPPHSLTYMEATSVCQCEKGYFRAEKDPPSMACTRPPSAPRNVVFNINETALILEWSPPSDTGGRKDLTYSVICKKCGLDTSQCEDCGGGLRFIPRHTGLINNSVIVLDFVSHVNYTFEIEAMNGVSELSFSPKPFTAITVTTDQDAPSLIGVVRKDWASQNSIALSWQAPAFSNGAILDYEIKYYEKEHEQLTYSSTRSKAPSVIITGLKPATKYVFHIRVRTATGYSGYSQKFEFETGDETSDMAAEQGQILVIATAAVGGFTLLVILTLFFLITGRCQWYIKAKMKSEEKRRNHLQNGHLRFPGIKTYIDPDTYEDPSLAVHEFAKEIDPSRIRIERVIGAGEFGEVCSGRLKTPGKREIPVAIKTLKGGHMDRQRRDFLREASIMGQFDHPNIIRLEGVVTKRSFPAIGVEAFCPSFLRAGFLNSIQAPHPVPGGGSLPPRIPAGRPVMIVVEYMENGSLDSFLRKHDGHFTVIQLVGMLRGIASGMKYLSDMGYVHRDLAARNILVNSNLVCKVSDFGLSRVLEDDPEAAYTTTGGKIPIRWTAPEAIAYRKFSSASDAWSYGIVMWEVMSYGERPYWEMSNQDVILSIEEGYRLPAPMGCPASLHQLMLHCWQKERNHRPKFTDIVSFLDKLIRNPSALHTLVEDILVMPESPGEVPEYPLFVTVGDWLDSIKMGQYKNNFVAAGFTTFDLISRMSIDDIRRIGVILIGHQRRIVSSIQTLRLHMMHIQEKGFHV.

Residues 1–22 form the signal peptide; the sequence is MGGCEVREFLLQFGFFLPLLTA. Topologically, residues 23–550 are extracellular; that stretch reads WPGDCSHVSN…MAAEQGQILV (528 aa). The region spanning 34–212 is the Eph LBD domain; that stretch reads QVVLLDTTTV…FYKKCPFTVR (179 aa). Fibronectin type-III domains are found at residues 331–441 and 442–537; these read PPSA…TDQD and APSL…TGDE. 3 N-linked (GlcNAc...) asparagine glycosylation sites follow: Asn343, Asn397, and Asn410. Residues 551 to 571 traverse the membrane as a helical segment; it reads IATAAVGGFTLLVILTLFFLI. Residues 572 to 1036 are Cytoplasmic-facing; that stretch reads TGRCQWYIKA…MHIQEKGFHV (465 aa). 2 positions are modified to phosphotyrosine; by autocatalysis: Tyr606 and Tyr612. The Protein kinase domain occupies 631–944; it reads IRIERVIGAG…RNPSALHTLV (314 aa). Residues 637–645 and Lys663 each bind ATP; that span reads IGAGEFGEV. Asp798 functions as the Proton acceptor in the catalytic mechanism. Phosphotyrosine; by autocatalysis is present on residues Tyr831 and Tyr978. Residues 961–1025 form the SAM domain; it reads PLFVTVGDWL…VSSIQTLRLH (65 aa). The PDZ-binding signature appears at 1034–1036; sequence FHV.

Belongs to the protein kinase superfamily. Tyr protein kinase family. Ephrin receptor subfamily. In terms of assembly, heterotetramer upon binding of the ligand. The heterotetramer is composed of an ephrin dimer and a receptor dimer. Oligomerization is probably required to induce biological responses. Interacts (via SAM domain) with ANKS1A (via SAM domain). As to expression, expressed in brain and testis.

The protein localises to the membrane. It carries out the reaction L-tyrosyl-[protein] + ATP = O-phospho-L-tyrosyl-[protein] + ADP + H(+). Its function is as follows. Receptor tyrosine kinase which binds promiscuously GPI-anchored ephrin-A family ligands residing on adjacent cells, leading to contact-dependent bidirectional signaling into neighboring cells. The signaling pathway downstream of the receptor is referred to as forward signaling while the signaling pathway downstream of the ephrin ligand is referred to as reverse signaling. The polypeptide is Ephrin type-A receptor 6 (EPHA6) (Homo sapiens (Human)).